Consider the following 131-residue polypeptide: Large ribosomal subunit protein bL17 (131 aa).

Belongs to the bacterial ribosomal protein bL17 family. In terms of assembly, part of the 50S ribosomal subunit. Contacts protein L32.

This chain is Large ribosomal subunit protein bL17, found in Shewanella baltica (strain OS223).